The primary structure comprises 102 residues: Large ribosomal subunit protein uL24 (102 aa).

This sequence belongs to the universal ribosomal protein uL24 family. Part of the 50S ribosomal subunit.

Its function is as follows. One of two assembly initiator proteins, it binds directly to the 5'-end of the 23S rRNA, where it nucleates assembly of the 50S subunit. One of the proteins that surrounds the polypeptide exit tunnel on the outside of the subunit. This is Large ribosomal subunit protein uL24 from Limosilactobacillus reuteri (strain DSM 20016) (Lactobacillus reuteri).